Consider the following 245-residue polypeptide: MAAAIASSLIRQKRQAREREKSNACKCVSSPSKSKGNCEKNKLNVFSRVKLFGSKKRRRRRPEPQLKGIVTKLYSRQGYHLQLQPDGTIDGAKEEESSATVFNLIPVGLRVVAIQGVQTKLYLAMNSEGYLYTSEHFTPECKFKESVFENYYVTYSSMIYRQQHSGRSWFLGLNKEGEIMKGNHVKKNKPAAHFLPKPLKVAMYKEPSLHDLTEFSRSGSGTPTKSRSVSGVLNGGKSMSQNDST.

Disordered stretches follow at residues 1-37 and 213-245; these read MAAAIASSLIRQKRQAREREKSNACKCVSSPSKSKGN and TEFSRSGSGTPTKSRSVSGVLNGGKSMSQNDST. Residues 1 to 62 form a mediates targeting to the nucleus region; that stretch reads MAAAIASSLI…GSKKRRRRRP (62 aa). Polar residues predominate over residues 215-245; sequence FSRSGSGTPTKSRSVSGVLNGGKSMSQNDST.

The protein belongs to the heparin-binding growth factors family.

It is found in the cell projection. Its subcellular location is the filopodium. The protein localises to the growth cone. The protein resides in the dendrite. It localises to the cell membrane. It is found in the sarcolemma. Its subcellular location is the cytoplasm. Microtubule-binding protein which directly binds tubulin and is involved in both polymerization and stabilization of microtubules. Through its action on microtubules, may participate in the refinement of axons by negatively regulating axonal and leading processes branching. Plays a crucial role in neuron polarization and migration. Regulates voltage-gated sodium channel transport and function. Required for proper head development, it is involved in neural differentiation through regulation of the mek5-erk5 pathway. The chain is Fibroblast growth factor 13 (fgf13) from Xenopus laevis (African clawed frog).